The following is a 336-amino-acid chain: Acetaldehyde dehydrogenase 1 (336 aa).

32 to 35 contributes to the NAD(+) binding site; that stretch reads SGVV. Catalysis depends on C150, which acts as the Acyl-thioester intermediate. An NAD(+)-binding site is contributed by N309.

This sequence belongs to the acetaldehyde dehydrogenase family.

The enzyme catalyses acetaldehyde + NAD(+) + CoA = acetyl-CoA + NADH + H(+). This is Acetaldehyde dehydrogenase 1 (mhpF) from Mycobacterium ulcerans (strain Agy99).